A 286-amino-acid chain; its full sequence is Alpha/beta-gliadin (286 aa).

An N-terminal signal peptide occupies residues 1–20 (MKTFLILVLLAIVATTATTA). Residues 51–120 (LGQQQPFPPQ…QQPISQQQQQ (70 aa)) are disordered. Over residues 56–71 (PFPPQQPYPQPQPFPS) the composition is skewed to pro residues. Positions 72 to 92 (QLPYLQLQPFPQPQLPYSQPQ) are enriched in low complexity. A compositionally biased stretch (pro residues) spans 93–104 (PFRPQQPYPQPQ). Residues 105–120 (PQYSQPQQPISQQQQQ) are compositionally biased toward low complexity.

It belongs to the gliadin/glutenin family. In terms of processing, substrate of transglutaminase.

Functionally, gliadin is the major seed storage protein in wheat. In Triticum aestivum (Wheat), this protein is Alpha/beta-gliadin.